The following is a 1151-amino-acid chain: PPi-type phosphoenolpyruvate carboxykinase 1 (1151 aa).

Residues 1083–1129 (RQKLEVAKLNKDLAYLNKTIAEKPRLAETLNKQIAAVKEELQYVSSE) adopt a coiled-coil conformation.

The protein belongs to the PPi-type phosphoenolpyruvate carboxykinase family. In terms of assembly, monomer and trimer; forms heterotrimers with PEPCK2 and PEPCK3.

The protein resides in the cytoplasm. It localises to the cytosol. It carries out the reaction oxaloacetate + diphosphate = phosphoenolpyruvate + phosphate + CO2. Functionally, inorganic pyrophosphate (PPi)-dependent phosphoenolpyruvate carboxykinase, which regulates the carbon flow of the central metabolism by fixing CO(2) to phosphoenolpyruvate to produce oxaloacetate. Can also produce pyruvate and diphosphate from phosphoenolpyruvate and phosphate. This is PPi-type phosphoenolpyruvate carboxykinase 1 from Entamoeba histolytica (strain ATCC 30459 / HM-1:IMSS / ABRM).